The following is a 381-amino-acid chain: Succinyl-diaminopimelate desuccinylase (381 aa).

A Zn(2+)-binding site is contributed by His71. Asp73 is an active-site residue. Asp104 serves as a coordination point for Zn(2+). The active-site Proton acceptor is the Glu138. Residues Glu139, Glu167, and His353 each contribute to the Zn(2+) site.

Belongs to the peptidase M20A family. DapE subfamily. Homodimer. It depends on Zn(2+) as a cofactor. Co(2+) is required as a cofactor.

It catalyses the reaction N-succinyl-(2S,6S)-2,6-diaminopimelate + H2O = (2S,6S)-2,6-diaminopimelate + succinate. Its pathway is amino-acid biosynthesis; L-lysine biosynthesis via DAP pathway; LL-2,6-diaminopimelate from (S)-tetrahydrodipicolinate (succinylase route): step 3/3. Functionally, catalyzes the hydrolysis of N-succinyl-L,L-diaminopimelic acid (SDAP), forming succinate and LL-2,6-diaminopimelate (DAP), an intermediate involved in the bacterial biosynthesis of lysine and meso-diaminopimelic acid, an essential component of bacterial cell walls. This Shewanella pealeana (strain ATCC 700345 / ANG-SQ1) protein is Succinyl-diaminopimelate desuccinylase.